The following is a 731-amino-acid chain: 1,4-alpha-glucan branching enzyme GlgB 2 (731 aa).

Aspartate 410 functions as the Nucleophile in the catalytic mechanism. Residue glutamate 463 is the Proton donor of the active site.

The protein belongs to the glycosyl hydrolase 13 family. GlgB subfamily. Monomer.

It carries out the reaction Transfers a segment of a (1-&gt;4)-alpha-D-glucan chain to a primary hydroxy group in a similar glucan chain.. It functions in the pathway glycan biosynthesis; glycogen biosynthesis. Functionally, catalyzes the formation of the alpha-1,6-glucosidic linkages in glycogen by scission of a 1,4-alpha-linked oligosaccharide from growing alpha-1,4-glucan chains and the subsequent attachment of the oligosaccharide to the alpha-1,6 position. The sequence is that of 1,4-alpha-glucan branching enzyme GlgB 2 from Xanthomonas oryzae pv. oryzae (strain MAFF 311018).